Consider the following 347-residue polypeptide: Isopentenyl-diphosphate delta-isomerase (347 aa).

Residue 9 to 10 (RK) coordinates substrate. FMN contacts are provided by residues S67, 68–70 (SMT), S98, and N127. 98-100 (SQR) provides a ligand contact to substrate. Q162 is a binding site for substrate. Residue E163 coordinates Mg(2+). Residues K194, T224, 274 to 276 (GIR), and 295 to 296 (AA) each bind FMN.

Belongs to the IPP isomerase type 2 family. In terms of assembly, homooctamer. Dimer of tetramers. FMN is required as a cofactor. NADPH serves as cofactor. Requires Mg(2+) as cofactor.

The protein resides in the cytoplasm. The enzyme catalyses isopentenyl diphosphate = dimethylallyl diphosphate. In terms of biological role, involved in the biosynthesis of isoprenoids. Catalyzes the 1,3-allylic rearrangement of the homoallylic substrate isopentenyl (IPP) to its allylic isomer, dimethylallyl diphosphate (DMAPP). The polypeptide is Isopentenyl-diphosphate delta-isomerase (Cronobacter sakazakii (strain ATCC BAA-894) (Enterobacter sakazakii)).